Consider the following 94-residue polypeptide: Large ribosomal subunit protein uL23 (94 aa).

Belongs to the universal ribosomal protein uL23 family. Part of the 50S ribosomal subunit. Contacts protein L29, and trigger factor when it is bound to the ribosome.

Its function is as follows. One of the early assembly proteins it binds 23S rRNA. One of the proteins that surrounds the polypeptide exit tunnel on the outside of the ribosome. Forms the main docking site for trigger factor binding to the ribosome. In Akkermansia muciniphila (strain ATCC BAA-835 / DSM 22959 / JCM 33894 / BCRC 81048 / CCUG 64013 / CIP 107961 / Muc), this protein is Large ribosomal subunit protein uL23.